Here is a 441-residue protein sequence, read N- to C-terminus: Glutamate-1-semialdehyde 2,1-aminomutase (441 aa).

K270 carries the post-translational modification N6-(pyridoxal phosphate)lysine.

This sequence belongs to the class-III pyridoxal-phosphate-dependent aminotransferase family. HemL subfamily. Homodimer. Requires pyridoxal 5'-phosphate as cofactor.

It is found in the cytoplasm. It carries out the reaction (S)-4-amino-5-oxopentanoate = 5-aminolevulinate. It functions in the pathway porphyrin-containing compound metabolism; protoporphyrin-IX biosynthesis; 5-aminolevulinate from L-glutamyl-tRNA(Glu): step 2/2. The polypeptide is Glutamate-1-semialdehyde 2,1-aminomutase (hemL) (Propionibacterium freudenreichii subsp. freudenreichii).